The sequence spans 524 residues: Bifunctional purine biosynthesis protein PurH (524 aa).

An MGS-like domain is found at 1–144; it reads MTRRALVSVS…KNSAHVGVVV (144 aa).

It belongs to the PurH family.

It catalyses the reaction (6R)-10-formyltetrahydrofolate + 5-amino-1-(5-phospho-beta-D-ribosyl)imidazole-4-carboxamide = 5-formamido-1-(5-phospho-D-ribosyl)imidazole-4-carboxamide + (6S)-5,6,7,8-tetrahydrofolate. The enzyme catalyses IMP + H2O = 5-formamido-1-(5-phospho-D-ribosyl)imidazole-4-carboxamide. Its pathway is purine metabolism; IMP biosynthesis via de novo pathway; 5-formamido-1-(5-phospho-D-ribosyl)imidazole-4-carboxamide from 5-amino-1-(5-phospho-D-ribosyl)imidazole-4-carboxamide (10-formyl THF route): step 1/1. It functions in the pathway purine metabolism; IMP biosynthesis via de novo pathway; IMP from 5-formamido-1-(5-phospho-D-ribosyl)imidazole-4-carboxamide: step 1/1. In Anaeromyxobacter dehalogenans (strain 2CP-1 / ATCC BAA-258), this protein is Bifunctional purine biosynthesis protein PurH.